The primary structure comprises 278 residues: Cyclin-C (278 aa).

Residues 41-139 (NVIQALGEHL…ILECEFYLLE (99 aa)) form the Cyclin N-terminal domain. The interval 247 to 278 (TILSKMPKPKPPPNSEGEQGPNGSQNSSYSQS) is disordered. A compositionally biased stretch (polar residues) spans 267 to 278 (PNGSQNSSYSQS). Ser-270 carries the phosphoserine modification.

The protein belongs to the cyclin family. Cyclin C subfamily. As to quaternary structure, component of the Mediator complex, which is composed of MED1, MED4, MED6, MED7, MED8, MED9, MED10, MED11, MED12, MED13, MED13L, MED14, MED15, MED16, MED17, MED18, MED19, MED20, MED21, MED22, MED23, MED24, MED25, MED26, MED27, MED29, MED30, MED31, CCNC, CDK8 and CDC2L6/CDK11. The MED12, MED13, CCNC and CDK8 subunits form a distinct module termed the CDK8 module. Mediator containing the CDK8 module is less active than Mediator lacking this module in supporting transcriptional activation. Individual preparations of the Mediator complex lacking one or more distinct subunits have been variously termed ARC, CRSP, DRIP, PC2, SMCC and TRAP. The cylin/CDK pair formed by CCNC/CDK8 also associates with the large subunit of RNA polymerase II.

The protein resides in the nucleus. Component of the Mediator complex, a coactivator involved in regulated gene transcription of nearly all RNA polymerase II-dependent genes. Mediator functions as a bridge to convey information from gene-specific regulatory proteins to the basal RNA polymerase II transcription machinery. Mediator is recruited to promoters by direct interactions with regulatory proteins and serves as a scaffold for the assembly of a functional preinitiation complex with RNA polymerase II and the general transcription factors. Binds to and activates cyclin-dependent kinase CDK8 that phosphorylates the CTD (C-terminal domain) of the large subunit of RNA polymerase II (RNAp II), which may inhibit the formation of a transcription initiation complex. This Rattus norvegicus (Rat) protein is Cyclin-C (Ccnc).